An 82-amino-acid polypeptide reads, in one-letter code: Three-finger toxin MALT0063C (82 aa).

A signal peptide spans 1-21 (MRTLLLTLVVVTIVCLDLGNS). 4 disulfides stabilise this stretch: Cys-24/Cys-42, Cys-35/Cys-60, Cys-64/Cys-72, and Cys-73/Cys-78.

The protein belongs to the three-finger toxin family. Short-chain subfamily. Expressed by the venom gland.

The protein localises to the secreted. In Micrurus altirostris (Uruguayan coral snake), this protein is Three-finger toxin MALT0063C.